The following is a 464-amino-acid chain: F-box/WD repeat-containing protein 12 (464 aa).

The F-box domain occupies methionine 1–leucine 45. 8 WD repeats span residues tyrosine 89–aspartate 132, glycine 136–asparagine 174, arginine 178–threonine 217, arginine 222–glutamate 263, glutamate 270–aspartate 315, lysine 320–serine 367, glycine 370–glutamate 407, and arginine 416–serine 461.

As to quaternary structure, interacts with SKP1. Interacts with CUL1. Interacts with IL22RA1. In terms of tissue distribution, ubiquitously expressed.

Its pathway is protein modification; protein ubiquitination. Substrate-recognition component of the SCF (SKP1-CUL1-F-box protein)-type E3 ubiquitin ligase complex. Promotes degradation of interleukin-22 receptor subunit IL22RA1 in resting and IL22-stimulated conditions by facilitating its ubiquitination. Functions as a cell growth suppressor. The chain is F-box/WD repeat-containing protein 12 (FBXW12) from Homo sapiens (Human).